Consider the following 270-residue polypeptide: Glucosamine-6-phosphate deaminase (270 aa).

Asp-72 acts as the Proton acceptor; for enolization step in catalysis. The For ring-opening step role is filled by Asp-141. His-143 acts as the Proton acceptor; for ring-opening step in catalysis. Glu-148 acts as the For ring-opening step in catalysis.

This sequence belongs to the glucosamine/galactosamine-6-phosphate isomerase family. NagB subfamily.

The enzyme catalyses alpha-D-glucosamine 6-phosphate + H2O = beta-D-fructose 6-phosphate + NH4(+). The protein operates within amino-sugar metabolism; N-acetylneuraminate degradation; D-fructose 6-phosphate from N-acetylneuraminate: step 5/5. Allosterically activated by N-acetylglucosamine 6-phosphate (GlcNAc6P). Catalyzes the reversible isomerization-deamination of glucosamine 6-phosphate (GlcN6P) to form fructose 6-phosphate (Fru6P) and ammonium ion. The polypeptide is Glucosamine-6-phosphate deaminase (Treponema denticola (strain ATCC 35405 / DSM 14222 / CIP 103919 / JCM 8153 / KCTC 15104)).